The following is a 1658-amino-acid chain: Cortactin-binding protein 2 (1658 aa).

Disordered regions lie at residues 1 to 24, 203 to 235, 348 to 437, 451 to 475, and 495 to 612; these read MATDGASCEPDFSRAPEDAAGATA, KTKTSALEEELSAEKRRSTEMEAQMEKQLSEFD, GAAL…LHPG, GNANDPDQNGNTTQSPPSRDVSPTS, and RFTS…PPKP. Positions 119–276 form a coiled coil; that stretch reads RKMQERMSTQ…EQLKRGNDSK (158 aa). The segment covering 214 to 235 has biased composition (basic and acidic residues); sequence SAEKRRSTEMEAQMEKQLSEFD. Positions 385-394 are enriched in low complexity; the sequence is GPSAGSASST. A compositionally biased stretch (polar residues) spans 399–418; that stretch reads NSTAPPTVQTPGIAPQSYSQ. R495 is modified (asymmetric dimethylarginine). Positions 509–520 are enriched in low complexity; it reads AAPTGDGGTCPP. The segment covering 580–590 has biased composition (polar residues); that stretch reads TMASPPSSLPQ. ANK repeat units lie at residues 706–736, 740–769, 773–802, 806–835, 839–868, and 909–939; these read GRPTLLQQAATQGNVTLLSMLLNEEGLDINY, DGHSALYSAAKNGHTDCVRLLLNAGAQVNA, NGFTPLCAAAAQGHFKCVELLISYDANINH, EGQTPLYLACKNGNKECIQLLLEAGTDRSV, DGWTPVHAAVDTGNVDSLKLLMYHRAPACR, and EGWTAAHIAASKGFKNCLEILCMHGGLEPER. The disordered stretch occupies residues 1448 to 1478; the sequence is ESGAWRKVSTSPRKKSGRFSPPSWNKPGLSE. S1521 bears the Phosphoserine mark. Disordered stretches follow at residues 1538–1595 and 1611–1642; these read RSES…NSQS and PRSKVTQCSQNTKRSSSSSNTRQIEINNNTKE. Residues 1539 to 1558 show a composition bias toward basic and acidic residues; the sequence is SESDISKIADSRDDLRRFDG. Polar residues-rich tracts occupy residues 1559-1569 and 1581-1595; these read SRNNPAFSTVN and PLSSHETTECSNSQS. Low complexity predominate over residues 1619–1633; that stretch reads SQNTKRSSSSSNTRQ.

As to quaternary structure, interacts with CTTN/cortactin SH3 domain. Interacts with STRN, STRN4/zinedin and MOB4/phocein; this interactions mediate the association with the STRIPAK core complex and may regulate dendritic spine distribution of the STRIPAK complex in hippocampal neurons. Activation of glutamate receptors weakens the interaction with STRN and STRN4.

Its subcellular location is the cytoplasm. The protein resides in the cell cortex. It is found in the cell projection. The protein localises to the dendritic spine. Its function is as follows. Regulates the dendritic spine distribution of CTTN/cortactin in hippocampal neurons, and thus controls dendritic spinogenesis and dendritic spine maintenance. Associates with the striatin-interacting phosphatase and kinase (STRIPAK) core complex to regulate dendritic spine distribution of the STRIPAK complex in hippocampal neurons. In Neofelis nebulosa (Clouded leopard), this protein is Cortactin-binding protein 2 (CTTNBP2).